A 36-amino-acid polypeptide reads, in one-letter code: MEVNILGVIATALFIIIPTSFLLILYVKTASQEQEQ.

Residues 5–25 traverse the membrane as a helical segment; sequence ILGVIATALFIIIPTSFLLIL.

This sequence belongs to the PsbM family. As to quaternary structure, PSII is composed of 1 copy each of membrane proteins PsbA, PsbB, PsbC, PsbD, PsbE, PsbF, PsbH, PsbI, PsbJ, PsbK, PsbL, PsbM, PsbT, PsbX, PsbY, PsbZ, Psb30/Ycf12, at least 3 peripheral proteins of the oxygen-evolving complex and a large number of cofactors. It forms dimeric complexes.

It localises to the plastid. It is found in the chloroplast thylakoid membrane. Its function is as follows. One of the components of the core complex of photosystem II (PSII). PSII is a light-driven water:plastoquinone oxidoreductase that uses light energy to abstract electrons from H(2)O, generating O(2) and a proton gradient subsequently used for ATP formation. It consists of a core antenna complex that captures photons, and an electron transfer chain that converts photonic excitation into a charge separation. This subunit is found at the monomer-monomer interface. This Chlorella vulgaris (Green alga) protein is Photosystem II reaction center protein M.